A 265-amino-acid polypeptide reads, in one-letter code: HUWE1-associated protein modifying stress responses (265 aa).

Disordered regions lie at residues 1-22 (MEDKKEEGESEIQEHGPEHWFS), 145-170 (RNSRAPPRLTVVSPNRATPTETGSSV), 195-218 (VRSSTPGSPTHVSGSSNTGRRRNG), and 240-265 (GTRKRTSAQCGDVITDSPTHKRNRMI). 2 stretches are compositionally biased toward polar residues: residues 156–170 (VSPNRATPTETGSSV) and 195–212 (VRSSTPGSPTHVSGSSNT).

This sequence belongs to the HAPSTR1 family. In terms of assembly, oligomer.

The protein resides in the nucleus. The protein localises to the cytoplasm. Functionally, acts as a central player within a network of stress response pathways promoting cellular adaptability. Functions as a negative regulator of TP53/P53 in the cellular response to telomere erosion and probably also DNA damage. In Xenopus tropicalis (Western clawed frog), this protein is HUWE1-associated protein modifying stress responses.